The sequence spans 521 residues: Bifunctional purine biosynthesis protein PurH (521 aa).

In terms of domain architecture, MGS-like spans 1–145 (MIKQALISVS…KNHRDVTVVV (145 aa)).

It belongs to the PurH family.

It carries out the reaction (6R)-10-formyltetrahydrofolate + 5-amino-1-(5-phospho-beta-D-ribosyl)imidazole-4-carboxamide = 5-formamido-1-(5-phospho-D-ribosyl)imidazole-4-carboxamide + (6S)-5,6,7,8-tetrahydrofolate. The enzyme catalyses IMP + H2O = 5-formamido-1-(5-phospho-D-ribosyl)imidazole-4-carboxamide. The protein operates within purine metabolism; IMP biosynthesis via de novo pathway; 5-formamido-1-(5-phospho-D-ribosyl)imidazole-4-carboxamide from 5-amino-1-(5-phospho-D-ribosyl)imidazole-4-carboxamide (10-formyl THF route): step 1/1. It participates in purine metabolism; IMP biosynthesis via de novo pathway; IMP from 5-formamido-1-(5-phospho-D-ribosyl)imidazole-4-carboxamide: step 1/1. The sequence is that of Bifunctional purine biosynthesis protein PurH from Burkholderia ambifaria (strain ATCC BAA-244 / DSM 16087 / CCUG 44356 / LMG 19182 / AMMD) (Burkholderia cepacia (strain AMMD)).